Here is a 376-residue protein sequence, read N- to C-terminus: Erythronate-4-phosphate dehydrogenase (376 aa).

Substrate-binding residues include serine 45 and threonine 67. Position 147 (aspartate 147) interacts with NAD(+). The active site involves arginine 209. Residue aspartate 233 participates in NAD(+) binding. Residue glutamate 238 is part of the active site. Histidine 255 serves as the catalytic Proton donor. An NAD(+)-binding site is contributed by glycine 258. Position 259 (tyrosine 259) interacts with substrate.

The protein belongs to the D-isomer specific 2-hydroxyacid dehydrogenase family. PdxB subfamily. Homodimer.

It is found in the cytoplasm. The catalysed reaction is 4-phospho-D-erythronate + NAD(+) = (R)-3-hydroxy-2-oxo-4-phosphooxybutanoate + NADH + H(+). The protein operates within cofactor biosynthesis; pyridoxine 5'-phosphate biosynthesis; pyridoxine 5'-phosphate from D-erythrose 4-phosphate: step 2/5. Catalyzes the oxidation of erythronate-4-phosphate to 3-hydroxy-2-oxo-4-phosphonooxybutanoate. The protein is Erythronate-4-phosphate dehydrogenase of Shewanella sp. (strain ANA-3).